A 396-amino-acid chain; its full sequence is Lipid-A-disaccharide synthase (396 aa).

It belongs to the LpxB family.

The enzyme catalyses a lipid X + a UDP-2-N,3-O-bis[(3R)-3-hydroxyacyl]-alpha-D-glucosamine = a lipid A disaccharide + UDP + H(+). It participates in bacterial outer membrane biogenesis; LPS lipid A biosynthesis. Functionally, condensation of UDP-2,3-diacylglucosamine and 2,3-diacylglucosamine-1-phosphate to form lipid A disaccharide, a precursor of lipid A, a phosphorylated glycolipid that anchors the lipopolysaccharide to the outer membrane of the cell. The sequence is that of Lipid-A-disaccharide synthase from Nitrobacter winogradskyi (strain ATCC 25391 / DSM 10237 / CIP 104748 / NCIMB 11846 / Nb-255).